Consider the following 120-residue polypeptide: Large ribosomal subunit protein bL21 (120 aa).

Belongs to the bacterial ribosomal protein bL21 family. Part of the 50S ribosomal subunit. Contacts protein L20.

This protein binds to 23S rRNA in the presence of protein L20. This chain is Large ribosomal subunit protein bL21, found in Roseiflexus castenholzii (strain DSM 13941 / HLO8).